The primary structure comprises 324 residues: NADH-ubiquinone oxidoreductase chain 1 (324 aa).

8 consecutive transmembrane segments (helical) span residues 10 to 30 (MIMTLSYIIPILIAVAFLTLV), 76 to 96 (FLFIMTPILALLLALTIWIPL), 107 to 127 (LGLLFLLAMSSLTVYSLLWSG), 143 to 163 (VAQTISYEVTLAIILLSTIML), 178 to 198 (PIYLIFSSWPLAMMWYISTLA), 229 to 249 (LFFLAEYANIMLMNTLTITLF), 260 to 280 (ELFSITLATKVLLLSSSFLWV), and 300 to 320 (FLPLTLALCLWHTSMPISYAG).

This sequence belongs to the complex I subunit 1 family.

The protein localises to the mitochondrion inner membrane. The enzyme catalyses a ubiquinone + NADH + 5 H(+)(in) = a ubiquinol + NAD(+) + 4 H(+)(out). In terms of biological role, core subunit of the mitochondrial membrane respiratory chain NADH dehydrogenase (Complex I) that is believed to belong to the minimal assembly required for catalysis. Complex I functions in the transfer of electrons from NADH to the respiratory chain. The immediate electron acceptor for the enzyme is believed to be ubiquinone. The polypeptide is NADH-ubiquinone oxidoreductase chain 1 (MT-ND1) (Excalfactoria chinensis (Blue-breasted quail)).